The following is a 244-amino-acid chain: Uridylate kinase (244 aa).

Position 18-21 (Lys-18–Gly-21) interacts with ATP. The segment at Gly-26–Gly-31 is involved in allosteric activation by GTP. A UMP-binding site is contributed by Gly-60. ATP is bound by residues Gly-61 and Arg-65. Residues Asp-80 and Thr-141 to Thr-148 each bind UMP. Residues Thr-168, Tyr-174, and Asp-177 each contribute to the ATP site.

It belongs to the UMP kinase family. As to quaternary structure, homohexamer.

It is found in the cytoplasm. The enzyme catalyses UMP + ATP = UDP + ADP. The protein operates within pyrimidine metabolism; CTP biosynthesis via de novo pathway; UDP from UMP (UMPK route): step 1/1. Its activity is regulated as follows. Allosterically activated by GTP. Inhibited by UTP. Its function is as follows. Catalyzes the reversible phosphorylation of UMP to UDP. This Paracoccus denitrificans (strain Pd 1222) protein is Uridylate kinase.